A 157-amino-acid polypeptide reads, in one-letter code: ATP synthase subunit b (157 aa).

A helical membrane pass occupies residues leucine 11–methionine 31.

Belongs to the ATPase B chain family. In terms of assembly, F-type ATPases have 2 components, F(1) - the catalytic core - and F(0) - the membrane proton channel. F(1) has five subunits: alpha(3), beta(3), gamma(1), delta(1), epsilon(1). F(0) has three main subunits: a(1), b(2) and c(10-14). The alpha and beta chains form an alternating ring which encloses part of the gamma chain. F(1) is attached to F(0) by a central stalk formed by the gamma and epsilon chains, while a peripheral stalk is formed by the delta and b chains.

The protein localises to the cell inner membrane. In terms of biological role, f(1)F(0) ATP synthase produces ATP from ADP in the presence of a proton or sodium gradient. F-type ATPases consist of two structural domains, F(1) containing the extramembraneous catalytic core and F(0) containing the membrane proton channel, linked together by a central stalk and a peripheral stalk. During catalysis, ATP synthesis in the catalytic domain of F(1) is coupled via a rotary mechanism of the central stalk subunits to proton translocation. Functionally, component of the F(0) channel, it forms part of the peripheral stalk, linking F(1) to F(0). In Vesicomyosocius okutanii subsp. Calyptogena okutanii (strain HA), this protein is ATP synthase subunit b.